Here is a 134-residue protein sequence, read N- to C-terminus: MKAIYLILTVLCGFSASTKTGGWRDKDVDDEDIRKFATLAASENSKMSNSLYFEKLVKVIEAKSQVVSGVKYNITFEIAPTECKKNGKGYDKLSECPLLESAPHQTCTAIIWTRSWLNDTQILKLKCKEGGSSC.

An N-terminal signal peptide occupies residues 1–17 (MKAIYLILTVLCGFSAS). The region spanning 21–116 (GGWRDKDVDD…CTAIIWTRSW (96 aa)) is the Cystatin domain. A Secondary area of contact motif is present at residues 65–69 (QVVSG). Disulfide bonds link cysteine 83-cysteine 96 and cysteine 107-cysteine 127.

It belongs to the cystatin family. As to expression, expressed by the venom gland.

The protein resides in the secreted. Its function is as follows. Inhibits various C1 cysteine proteases. This protein has no toxic activity and its function in the venom is unknown. It may play a role as a housekeeping or regulatory protein. The polypeptide is Cystatin-1 (Chilobrachys guangxiensis (Chinese earth tiger tarantula)).